The sequence spans 137 residues: Large ribosomal subunit protein uL16 (137 aa).

This sequence belongs to the universal ribosomal protein uL16 family. In terms of assembly, part of the 50S ribosomal subunit.

Binds 23S rRNA and is also seen to make contacts with the A and possibly P site tRNAs. In Pseudomonas putida (strain ATCC 47054 / DSM 6125 / CFBP 8728 / NCIMB 11950 / KT2440), this protein is Large ribosomal subunit protein uL16.